Consider the following 539-residue polypeptide: Chaperonin GroEL (539 aa).

Residues T29–P32, D86–T90, G413, N477–A479, and D493 contribute to the ATP site.

The protein belongs to the chaperonin (HSP60) family. As to quaternary structure, forms a cylinder of 14 subunits composed of two heptameric rings stacked back-to-back. Interacts with the co-chaperonin GroES.

It is found in the cytoplasm. The enzyme catalyses ATP + H2O + a folded polypeptide = ADP + phosphate + an unfolded polypeptide.. Together with its co-chaperonin GroES, plays an essential role in assisting protein folding. The GroEL-GroES system forms a nano-cage that allows encapsulation of the non-native substrate proteins and provides a physical environment optimized to promote and accelerate protein folding. The chain is Chaperonin GroEL from Leifsonia xyli subsp. xyli (strain CTCB07).